The chain runs to 122 residues: N(2)-fixation sustaining protein CowN (122 aa).

Belongs to the CowN family.

Is required to sustain N(2)-dependent growth in the presence of low levels of carbon monoxide (CO). Probably acts by protecting the N(2) fixation ability of the nitrogenase complex, which is inactivated in the presence of CO. This is N(2)-fixation sustaining protein CowN from Azorhizobium caulinodans (strain ATCC 43989 / DSM 5975 / JCM 20966 / LMG 6465 / NBRC 14845 / NCIMB 13405 / ORS 571).